Here is an 83-residue protein sequence, read N- to C-terminus: Ferredoxin (83 aa).

4Fe-4S ferredoxin-type domains are found at residues 2 to 29 and 31 to 64; these read ALMITDECINCDVCEPECPNGAISQGDE and YVIEPSLCTECVGHYETSQCVEVCPVDCIIKDPS. Residues C9, C12, C15, C19, C38, C41, C50, and C54 each contribute to the [4Fe-4S] cluster site.

[4Fe-4S] cluster serves as cofactor.

Its function is as follows. Ferredoxins are iron-sulfur proteins that transfer electrons in a wide variety of metabolic reactions. This Allochromatium vinosum (strain ATCC 17899 / DSM 180 / NBRC 103801 / NCIMB 10441 / D) (Chromatium vinosum) protein is Ferredoxin (fdx).